We begin with the raw amino-acid sequence, 399 residues long: Formate-dependent phosphoribosylglycinamide formyltransferase (399 aa).

N(1)-(5-phospho-beta-D-ribosyl)glycinamide contacts are provided by residues 22–23 (EL) and E82. ATP is bound by residues R115, K157, 162–167 (SSGKGQ), 197–200 (EAVV), and E205. Positions 120–315 (RLAAEELGLQ…EFELHARAIL (196 aa)) constitute an ATP-grasp domain. Positions 274 and 286 each coordinate Mg(2+). N(1)-(5-phospho-beta-D-ribosyl)glycinamide is bound by residues D293, K362, and 369–370 (RR).

The protein belongs to the PurK/PurT family. As to quaternary structure, homodimer.

It catalyses the reaction N(1)-(5-phospho-beta-D-ribosyl)glycinamide + formate + ATP = N(2)-formyl-N(1)-(5-phospho-beta-D-ribosyl)glycinamide + ADP + phosphate + H(+). It functions in the pathway purine metabolism; IMP biosynthesis via de novo pathway; N(2)-formyl-N(1)-(5-phospho-D-ribosyl)glycinamide from N(1)-(5-phospho-D-ribosyl)glycinamide (formate route): step 1/1. Its function is as follows. Involved in the de novo purine biosynthesis. Catalyzes the transfer of formate to 5-phospho-ribosyl-glycinamide (GAR), producing 5-phospho-ribosyl-N-formylglycinamide (FGAR). Formate is provided by PurU via hydrolysis of 10-formyl-tetrahydrofolate. This Thioalkalivibrio sulfidiphilus (strain HL-EbGR7) protein is Formate-dependent phosphoribosylglycinamide formyltransferase.